Consider the following 527-residue polypeptide: Catalase (527 aa).

Residues 1–22 are compositionally biased toward basic and acidic residues; it reads MADSRDPASDQMKLWKEQRAAQ. The interval 1-34 is disordered; the sequence is MADSRDPASDQMKLWKEQRAAQKPDVLTTGGGNP. Position 2 is an N-acetylalanine (Ala2). Position 9 is a phosphoserine (Ser9). Lys13 is subject to N6-succinyllysine. Active-site residues include His75 and Asn148. Residues His194, Ser201, Arg203, and Asn213 each coordinate NADP(+). At Lys221 the chain carries N6-succinyllysine. Lys233 carries the post-translational modification N6-acetyllysine. Residues Lys237, Trp303, and His305 each contribute to the NADP(+) site. Tyr358 lines the heme pocket. A phosphoserine mark is found at Ser422 and Ser434. N6-acetyllysine; alternate occurs at positions 449 and 480. An N6-succinyllysine; alternate mark is found at Lys449 and Lys480. The residue at position 499 (Lys499) is an N6-acetyllysine. Thr511 is modified (phosphothreonine). Ser517 is subject to Phosphoserine. A Microbody targeting signal; atypical motif is present at residues 524–527; sequence KANL.

The protein belongs to the catalase family. Homotetramer. Interacts (via microbody targeting signal) with PEX5, monomeric form interacts with PEX5, leading to its translocation into peroxisomes. It depends on heme as a cofactor. NADP(+) serves as cofactor.

Its subcellular location is the peroxisome matrix. The enzyme catalyses 2 H2O2 = O2 + 2 H2O. Its function is as follows. Catalyzes the degradation of hydrogen peroxide (H(2)O(2)) generated by peroxisomal oxidases to water and oxygen, thereby protecting cells from the toxic effects of hydrogen peroxide. Promotes growth of cells including T-cells, B-cells, myeloid leukemia cells, melanoma cells, mastocytoma cells and normal and transformed fibroblast cells. This chain is Catalase (CAT), found in Canis lupus familiaris (Dog).